The sequence spans 223 residues: Serine/threonine/tyrosine-interacting protein (223 aa).

One can recognise a Tyrosine-protein phosphatase domain in the interval 28 to 176; sequence EMQEILPGLF…LQEYEAIYLA (149 aa). The short motif at 76-78 is the Interaction with FBXW7 element; the sequence is FQQ. 3 positions are modified to phosphoserine: serine 184, serine 193, and serine 201. The interval 197-223 is disordered; that stretch reads GTTGSLKRTHEEEDDFGTMQVATAQNG.

This sequence belongs to the protein-tyrosine phosphatase family. Non-receptor class subfamily. In terms of assembly, interacts with MAPK1; independently of MAPK1 phosphorylation status. Interacts with CARHSP1/Crhsp-24. Interacts (via FQQ motif) with FBXW7 isoforms 1 (via F-box domain) and 3 (via F-box domain); the interaction is direct and prevents FBXW7 interaction with SKP1, a component of the SCF(FBXW7) complex. Does not interact with FBXW7 isoform 2.

It is found in the nucleus. The protein resides in the cytoplasm. The protein localises to the cytosol. In terms of biological role, catalytically inactive phosphatase. Acts as a nuclear anchor for MAPK1/MAPK3 (ERK1/ERK2). Modulates cell-fate decisions and cell migration by spatiotemporal regulation of MAPK1/MAPK3 (ERK1/ERK2). By binding to the F-box of FBXW7, prevents the assembly of FBXW7 into the SCF E3 ubiquitin-protein ligase complex, and thereby inhibits degradation of its substrates. Plays a role in spermatogenesis. In Homo sapiens (Human), this protein is Serine/threonine/tyrosine-interacting protein.